A 195-amino-acid polypeptide reads, in one-letter code: 3-isopropylmalate dehydratase small subunit (195 aa).

Belongs to the LeuD family. LeuD type 1 subfamily. Heterodimer of LeuC and LeuD.

It catalyses the reaction (2R,3S)-3-isopropylmalate = (2S)-2-isopropylmalate. It functions in the pathway amino-acid biosynthesis; L-leucine biosynthesis; L-leucine from 3-methyl-2-oxobutanoate: step 2/4. Catalyzes the isomerization between 2-isopropylmalate and 3-isopropylmalate, via the formation of 2-isopropylmaleate. The polypeptide is 3-isopropylmalate dehydratase small subunit (Frankia alni (strain DSM 45986 / CECT 9034 / ACN14a)).